The sequence spans 814 residues: Protein ADP-ribosyltransferase PARP3 (814 aa).

Basic and acidic residues-rich tracts occupy residues 1–19 (MKVH…EQKG) and 27–48 (EGKL…DDGR). Residues 1–52 (MKVHETRSHAHMSGDEQKGNLRKHKAEGKLPESEQSQKKAKPENDDGRSVNG) form a disordered region. The PADR1 zinc-binding domain maps to 38–186 (KKAKPENDDG…KRELGSADKP (149 aa)). The interval 105–150 (GALAKCPLCGGTLICDNEKRFVCGGEISEWCSCVFSTKDPPRKEEP) is zinc ribbon. 4 residues coordinate Zn(2+): C110, C113, C127, and C137. TPR repeat units follow at residues 182–215 (SADK…NGGK) and 277–310 (DLSV…YGKR). In terms of domain architecture, BRCT spans 187-274 (FVGMMISLMG…EAQPLEAYDV (88 aa)). The region spanning 322-422 (GGKIFEKDGL…KKIQKKPHKF (101 aa)) is the WGR domain. One can recognise a PARP alpha-helical domain in the interval 449–568 (HCKLDSFVAN…DINTASRLIG (120 aa)). In terms of domain architecture, PARP catalytic spans 577-808 (DPLSDRYKKL…VKYEEKGTEI (232 aa)).

It belongs to the ARTD/PARP family.

Its subcellular location is the nucleus. The catalysed reaction is L-aspartyl-[protein] + NAD(+) = 4-O-(ADP-D-ribosyl)-L-aspartyl-[protein] + nicotinamide. The enzyme catalyses L-glutamyl-[protein] + NAD(+) = 5-O-(ADP-D-ribosyl)-L-glutamyl-[protein] + nicotinamide. Involved in the base excision repair (BER) pathway, by catalyzing the poly(ADP-ribosyl)ation of a limited number of acceptor proteins involved in chromatin architecture and in DNA metabolism. This modification follows DNA damages and appears as an obligatory step in a detection/signaling pathway leading to the reparation of DNA strand breaks. In Arabidopsis thaliana (Mouse-ear cress), this protein is Protein ADP-ribosyltransferase PARP3 (PARP3).